Consider the following 352-residue polypeptide: Biotin synthase (352 aa).

The 219-residue stretch at 44-262 folds into the Radical SAM core domain; the sequence is NRVQVSTLLS…LAVARIMMPK (219 aa). [4Fe-4S] cluster contacts are provided by Cys59, Cys63, and Cys66. [2Fe-2S] cluster contacts are provided by Cys103, Cys134, Cys194, and Arg266.

It belongs to the radical SAM superfamily. Biotin synthase family. In terms of assembly, homodimer. It depends on [4Fe-4S] cluster as a cofactor. [2Fe-2S] cluster is required as a cofactor.

It carries out the reaction (4R,5S)-dethiobiotin + (sulfur carrier)-SH + 2 reduced [2Fe-2S]-[ferredoxin] + 2 S-adenosyl-L-methionine = (sulfur carrier)-H + biotin + 2 5'-deoxyadenosine + 2 L-methionine + 2 oxidized [2Fe-2S]-[ferredoxin]. Its pathway is cofactor biosynthesis; biotin biosynthesis; biotin from 7,8-diaminononanoate: step 2/2. Catalyzes the conversion of dethiobiotin (DTB) to biotin by the insertion of a sulfur atom into dethiobiotin via a radical-based mechanism. This chain is Biotin synthase, found in Pseudomonas paraeruginosa (strain DSM 24068 / PA7) (Pseudomonas aeruginosa (strain PA7)).